Reading from the N-terminus, the 344-residue chain is Phenylalanine--tRNA ligase alpha subunit (344 aa).

Glu256 contacts Mg(2+).

Belongs to the class-II aminoacyl-tRNA synthetase family. Phe-tRNA synthetase alpha subunit type 1 subfamily. As to quaternary structure, tetramer of two alpha and two beta subunits. The cofactor is Mg(2+).

It localises to the cytoplasm. It carries out the reaction tRNA(Phe) + L-phenylalanine + ATP = L-phenylalanyl-tRNA(Phe) + AMP + diphosphate + H(+). This chain is Phenylalanine--tRNA ligase alpha subunit, found in Bacillus licheniformis (strain ATCC 14580 / DSM 13 / JCM 2505 / CCUG 7422 / NBRC 12200 / NCIMB 9375 / NCTC 10341 / NRRL NRS-1264 / Gibson 46).